We begin with the raw amino-acid sequence, 563 residues long: (-)-germacrene D synthase (563 aa).

A coiled-coil region spans residues 44 to 71; it reads TEITAAEKEELEKQKEKVKNLLDQTPND. 2 residues coordinate Mn(2+): Asp314 and Asp318. The short motif at 314–318 is the DDXXD motif element; that stretch reads DDIYD. 2 homodimerization regions span residues 320-326 and 392-429; these read YGSLDEL and EAEWCFSKYFPTMEEYMKQALVSGAYMMLSTTSLVGME. Residues Asp459 and Glu467 each contribute to the Mn(2+) site.

Belongs to the terpene synthase family. As to quaternary structure, homodimer. Requires Mn(2+) as cofactor. Mg(2+) is required as a cofactor. Expressed in peltate glandular trichomes. Present at low levels in flowers, leaves and stems.

It carries out the reaction (2E,6E)-farnesyl diphosphate = (-)-germacrene D + diphosphate. It functions in the pathway secondary metabolite biosynthesis; terpenoid biosynthesis. Functionally, involved in the biosynthesis of phenolic sesquiterpenes natural products. Sesquiterpene synthase that catalyzes mainly the formation of (-)-germacrene D and minor amounts of other sesquiterpenes (e.g. bicyclo-germacrene) from farnesyl diphosphate (FPP). Also triggers moderate amounts formation of myrcene, limonene, terpinolene and linalool in the presence of geranyl diphosphate (GPP). This is (-)-germacrene D synthase from Origanum vulgare (Wild marjoram).